The following is a 161-amino-acid chain: Cytidylate kinase (161 aa).

7–15 (GLAGTGTTT) lines the ATP pocket.

It belongs to the cytidylate kinase family. Type 2 subfamily.

It is found in the cytoplasm. It carries out the reaction CMP + ATP = CDP + ADP. The enzyme catalyses dCMP + ATP = dCDP + ADP. In Methanothermobacter thermautotrophicus (strain ATCC 29096 / DSM 1053 / JCM 10044 / NBRC 100330 / Delta H) (Methanobacterium thermoautotrophicum), this protein is Cytidylate kinase (cmk).